The sequence spans 557 residues: UvrABC system protein C (557 aa).

Residues 14-89 (EEPGVYIFKN…IKKYRPKYNV (76 aa)) enclose the GIY-YIG domain. In terms of domain architecture, UVR spans 194 to 229 (EEVFDYLKEKMETHSRMLDFENAAKYRDLLLNLSNV).

This sequence belongs to the UvrC family. In terms of assembly, interacts with UvrB in an incision complex.

It localises to the cytoplasm. In terms of biological role, the UvrABC repair system catalyzes the recognition and processing of DNA lesions. UvrC both incises the 5' and 3' sides of the lesion. The N-terminal half is responsible for the 3' incision and the C-terminal half is responsible for the 5' incision. In Thermotoga petrophila (strain ATCC BAA-488 / DSM 13995 / JCM 10881 / RKU-1), this protein is UvrABC system protein C.